A 316-amino-acid polypeptide reads, in one-letter code: Adenine deaminase (316 aa).

The Zn(2+) site is built by His14, His16, and His194. The active-site Proton donor is the Glu197. Residue Asp275 participates in Zn(2+) binding. Asp276 contributes to the substrate binding site.

This sequence belongs to the metallo-dependent hydrolases superfamily. Adenosine and AMP deaminases family. Adenine deaminase type 2 subfamily. Zn(2+) serves as cofactor.

The catalysed reaction is adenine + H2O + H(+) = hypoxanthine + NH4(+). Functionally, catalyzes the hydrolytic deamination of adenine to hypoxanthine. Plays an important role in the purine salvage pathway and in nitrogen catabolism. This Pseudomonas aeruginosa (strain UCBPP-PA14) protein is Adenine deaminase.